Here is a 132-residue protein sequence, read N- to C-terminus: Small ribosomal subunit protein uS8 (132 aa).

It belongs to the universal ribosomal protein uS8 family. As to quaternary structure, part of the 30S ribosomal subunit. Contacts proteins S5 and S12.

Functionally, one of the primary rRNA binding proteins, it binds directly to 16S rRNA central domain where it helps coordinate assembly of the platform of the 30S subunit. This Francisella philomiragia subsp. philomiragia (strain ATCC 25017 / CCUG 19701 / FSC 153 / O#319-036) protein is Small ribosomal subunit protein uS8.